The chain runs to 181 residues: Ribose 1,5-bisphosphate phosphokinase PhnN (181 aa).

Position 12 to 19 (G12 to D19) interacts with ATP.

Belongs to the ribose 1,5-bisphosphokinase family.

The enzyme catalyses alpha-D-ribose 1,5-bisphosphate + ATP = 5-phospho-alpha-D-ribose 1-diphosphate + ADP. It functions in the pathway metabolic intermediate biosynthesis; 5-phospho-alpha-D-ribose 1-diphosphate biosynthesis; 5-phospho-alpha-D-ribose 1-diphosphate from D-ribose 5-phosphate (route II): step 3/3. Functionally, catalyzes the phosphorylation of ribose 1,5-bisphosphate to 5-phospho-D-ribosyl alpha-1-diphosphate (PRPP). The chain is Ribose 1,5-bisphosphate phosphokinase PhnN from Acidiphilium cryptum (strain JF-5).